Here is a 284-residue protein sequence, read N- to C-terminus: ATP phosphoribosyltransferase (284 aa).

The protein belongs to the ATP phosphoribosyltransferase family. Long subfamily. Mg(2+) serves as cofactor.

It is found in the cytoplasm. It carries out the reaction 1-(5-phospho-beta-D-ribosyl)-ATP + diphosphate = 5-phospho-alpha-D-ribose 1-diphosphate + ATP. Its pathway is amino-acid biosynthesis; L-histidine biosynthesis; L-histidine from 5-phospho-alpha-D-ribose 1-diphosphate: step 1/9. With respect to regulation, feedback inhibited by histidine. Functionally, catalyzes the condensation of ATP and 5-phosphoribose 1-diphosphate to form N'-(5'-phosphoribosyl)-ATP (PR-ATP). Has a crucial role in the pathway because the rate of histidine biosynthesis seems to be controlled primarily by regulation of HisG enzymatic activity. The polypeptide is ATP phosphoribosyltransferase (Methanococcoides burtonii (strain DSM 6242 / NBRC 107633 / OCM 468 / ACE-M)).